A 402-amino-acid polypeptide reads, in one-letter code: Formate-dependent phosphoribosylglycinamide formyltransferase (402 aa).

N(1)-(5-phospho-beta-D-ribosyl)glycinamide-binding positions include 25-26 and Glu-85; that span reads EL. Residues Arg-118, Lys-159, 164-169, 199-202, and Glu-207 contribute to the ATP site; these read SSGKGQ and EQFV. The 196-residue stretch at 123–318 folds into the ATP-grasp domain; sequence RLASEELGLP…EFELHAKAVL (196 aa). Residues Glu-277 and Glu-289 each contribute to the Mg(2+) site. N(1)-(5-phospho-beta-D-ribosyl)glycinamide-binding positions include Asp-296, Lys-365, and 372-373; that span reads RR.

This sequence belongs to the PurK/PurT family. Homodimer.

It carries out the reaction N(1)-(5-phospho-beta-D-ribosyl)glycinamide + formate + ATP = N(2)-formyl-N(1)-(5-phospho-beta-D-ribosyl)glycinamide + ADP + phosphate + H(+). Its pathway is purine metabolism; IMP biosynthesis via de novo pathway; N(2)-formyl-N(1)-(5-phospho-D-ribosyl)glycinamide from N(1)-(5-phospho-D-ribosyl)glycinamide (formate route): step 1/1. Involved in the de novo purine biosynthesis. Catalyzes the transfer of formate to 5-phospho-ribosyl-glycinamide (GAR), producing 5-phospho-ribosyl-N-formylglycinamide (FGAR). Formate is provided by PurU via hydrolysis of 10-formyl-tetrahydrofolate. The protein is Formate-dependent phosphoribosylglycinamide formyltransferase of Corynebacterium efficiens (strain DSM 44549 / YS-314 / AJ 12310 / JCM 11189 / NBRC 100395).